The sequence spans 108 residues: VQ motif-containing protein 10 (108 aa).

The short motif at 29–38 (FKTVVQELTG) is the VQ element. The segment at 65–85 (IGEDTRQLHGGGGGGGRMGTT) is disordered. Over residues 73–82 (HGGGGGGGRM) the composition is skewed to gly residues.

Interacts with WRKY25, WRKY26 and WRKY33.

Its subcellular location is the nucleus. Functionally, may modulate WRKY transcription factor activities. The protein is VQ motif-containing protein 10 of Arabidopsis thaliana (Mouse-ear cress).